The sequence spans 570 residues: High-affinity hexose transporter HXT7 (570 aa).

Topologically, residues 1-60 are cytoplasmic; it reads MSQDAAIAEQTPVEHLSAVDSASHSVLSTPSNKAERDEIKAYGEGEEHEPVVEIPKRPAS. Residues 61–81 traverse the membrane as a helical segment; sequence AYVTVSIMCIMIAFGGFVFGW. Residues 82–116 are Extracellular-facing; that stretch reads DTGTISGFINQTDFIRRFGMKHKDGTNYLSKVRTG. Residue asparagine 91 is glycosylated (N-linked (GlcNAc...) asparagine). Residues 117 to 137 traverse the membrane as a helical segment; it reads LIVSIFNIGCAIGGIILSKLG. Residues 138-143 lie on the Cytoplasmic side of the membrane; that stretch reads DMYGRK. The chain crosses the membrane as a helical span at residues 144-164; sequence VGLIVVVVIYIIGIIIQIASI. Residues 165–174 lie on the Extracellular side of the membrane; that stretch reads NKWYQYFIGR. Residues 175 to 195 form a helical membrane-spanning segment; that stretch reads IISGLGVGGIAVLSPMLISEV. Topologically, residues 196–201 are cytoplasmic; it reads SPKHLR. A helical transmembrane segment spans residues 202–222; that stretch reads GTLVSCYQLMITAGIFLGYCT. Over 223–236 the chain is Extracellular; that stretch reads NFGTKNYSNSVQWR. Asparagine 228 carries N-linked (GlcNAc...) asparagine glycosylation. The chain crosses the membrane as a helical span at residues 237–257; that stretch reads VPLGLCFAWALFMIGGMTFVP. Residues 258–340 are Cytoplasmic-facing; sequence ESPRYLAEVG…IQSLQQLTGD (83 aa). The chain crosses the membrane as a helical span at residues 341–357; the sequence is NYFFYYGTTIFKAVGLS. Topologically, residues 358–363 are extracellular; sequence DSFETS. A helical membrane pass occupies residues 364-381; sequence IVLGIVNFASTFVGIYVV. Residues 382 to 388 lie on the Cytoplasmic side of the membrane; that stretch reads ERYGRRT. The helical transmembrane segment at 389–409 threads the bilayer; the sequence is CLLWGAASMTACMVVYASVGV. At 410-431 the chain is on the extracellular side; sequence TRLWPNGQDQPSSKGAGNCMIV. A helical transmembrane segment spans residues 432–452; the sequence is FACFYIFCFATTWAPIPYVVV. Over 453–469 the chain is Cytoplasmic; that stretch reads SETFPLRVKSKAMSIAT. Residues 470–490 traverse the membrane as a helical segment; that stretch reads AANWLWGFLIGFFTPFITGAI. Asparagine 491 is a topological domain (extracellular). Residues 492 to 512 form a helical membrane-spanning segment; that stretch reads FYYGYVFMGCLVFMFFYVLLV. The Cytoplasmic segment spans residues 513 to 570; that stretch reads VPETKGLTLEEVNTMWEEGVLPWKSASWVPPSRRGANYDAEEMTHDDKPLYKRMFSTK. The residue at position 556 (threonine 556) is a Phosphothreonine. Lysine 560 is covalently cross-linked (Glycyl lysine isopeptide (Lys-Gly) (interchain with G-Cter in ubiquitin)).

Belongs to the major facilitator superfamily. Sugar transporter (TC 2.A.1.1) family.

The protein resides in the membrane. Its function is as follows. High-affinity glucose transporter. This chain is High-affinity hexose transporter HXT7 (HXT7), found in Saccharomyces cerevisiae (strain ATCC 204508 / S288c) (Baker's yeast).